Consider the following 144-residue polypeptide: Large ribosomal subunit protein uL15 (144 aa).

The interval 1 to 45 (MNLNTLSPDPGSRPSRRRVGRGIGSGLGKTCGKGHKGQKSRAGGY) is disordered. Gly residues predominate over residues 21–31 (RGIGSGLGKTC).

The protein belongs to the universal ribosomal protein uL15 family. In terms of assembly, part of the 50S ribosomal subunit.

In terms of biological role, binds to the 23S rRNA. The chain is Large ribosomal subunit protein uL15 from Legionella pneumophila (strain Corby).